The chain runs to 373 residues: Lipoyl amidotransferase LIPT1, mitochondrial (373 aa).

A mitochondrion-targeting transit peptide spans 1-25 (MLIPFSMKNCFQLLCNLKVPAAGFK). In terms of domain architecture, BPL/LPL catalytic spans 57–243 (LEGKPVLFLW…EYATSHQIDN (187 aa)). Tyr-107, Arg-151, Lys-161, Thr-179, Thr-208, and Ala-210 together coordinate (R)-lipoyl-5'-AMP.

Belongs to the LplA family.

It localises to the mitochondrion. The catalysed reaction is N(6)-[(R)-lipoyl]-L-lysyl-[glycine-cleavage complex H protein] + L-lysyl-[lipoyl-carrier protein] = L-lysyl-[glycine-cleavage complex H protein] + N(6)-[(R)-lipoyl]-L-lysyl-[lipoyl-carrier protein]. The enzyme catalyses (R)-lipoyl-5'-AMP + L-lysyl-[lipoyl-carrier protein] = N(6)-[(R)-lipoyl]-L-lysyl-[lipoyl-carrier protein] + AMP + 2 H(+). The protein operates within protein modification; protein lipoylation via exogenous pathway; protein N(6)-(lipoyl)lysine from lipoate: step 2/2. Inhibited by lipoyl-AMP analogs including hexanoyl-, octanoyl- and decanoyl-AMP. Functionally, lipoyl amidotransferase that catalyzes the transfer of lipoyl moieties from lipoyl-protein H of the glycine cleavage system (lipoyl-GCSH) to E2 subunits of the pyruvate dehydrogenase complex (PDCE2). Unable to catalyze the transfer of octanoyl from octanoyl-GCSH to PDCE2. In vitro, it is also able to catalyze the transfer of the lipoyl group from lipoyl-AMP to the specific lysine residue of lipoyl domains of lipoate-dependent enzymes but this reaction may not be physiologically relevant. The polypeptide is Lipoyl amidotransferase LIPT1, mitochondrial (LIPT1) (Bos taurus (Bovine)).